The primary structure comprises 85 residues: MNTNHFLKADVPIAKRKIESAEELSIMLSEALRDGDYEEAISLAGSIKVLTEDISRLANKGRLYETALKMQQQGINLTVVSRCIG.

As to quaternary structure, interacts with domain IV of DnaA and with Spo0A.

Functionally, binds to and counteracts DnaA replication initiation activity; overexpression decreases the number of replication initiation events. Also antagonizes DnaA's transcriptional regulation activity. Ectopic expression during exponential phase stops cell growth 2 hours after induction, leading to filamentation, aberrant chromosome segregation and septoid-trapped nucleoids. Overexpression during sporulation onset leads to dramatic reductions in spore formation. The chain is Small protein YqaH (yqaH) from Bacillus subtilis (strain 168).